The chain runs to 315 residues: Intradiol ring-cleavage dioxygenase prcA (315 aa).

Residues Tyr-166, Tyr-200, His-224, and His-226 each coordinate Fe cation. The disordered stretch occupies residues 287-315; the sequence is KKHHPNPNSAPPVSSFERFNKASKTQEKL. Residues 304 to 315 show a composition bias toward basic and acidic residues; that stretch reads RFNKASKTQEKL.

The protein belongs to the intradiol ring-cleavage dioxygenase family. Homodimer. Fe(3+) is required as a cofactor.

The enzyme catalyses 3,4-dihydroxybenzoate + O2 = 3-carboxy-cis,cis-muconate + 2 H(+). In terms of biological role, intradiol ring-cleavage dioxygenase; part of the benzoic acid degradation pathway also known as the protocatechuic acid pathway. Benzoic acid debradation begins with the conversion of benzoic acid into 4-hydroxybenzoic acid through hydroxylation by the benzoate-4-monooxygenase bphA, and its partner NADPH-cytochrome P450 reductase cprA which act as a mediator in electron donation from NADPH. 4-Hydroxybenzoic acid is then converted into 3,4-dihydroxybenzoic acid (also called protocatechuic acid) by the p-hydroxybenzoate-m-hydroxylase phhA. Protocatechuic acid is converted into 3-carboxy-cis,cis-muconic acid by the intradiol ring-cleavage dioxygenase prcA, which is further metabolized through the 3-oxoadipate pathway to finally enter the tricarboxylic acid cycle (TCA). The polypeptide is Intradiol ring-cleavage dioxygenase prcA (Aspergillus niger (strain ATCC MYA-4892 / CBS 513.88 / FGSC A1513)).